The primary structure comprises 339 residues: Anthranilate phosphoribosyltransferase (339 aa).

5-phospho-alpha-D-ribose 1-diphosphate is bound by residues Gly-81, 84-85, Ser-89, 91-94, 109-117, and Ala-121; these read GD, NVSS, and KHGNRALSS. Gly-81 contributes to the anthranilate binding site. Ser-93 lines the Mg(2+) pocket. An anthranilate-binding site is contributed by Asn-112. Residue Arg-167 coordinates anthranilate. Residues Asp-225 and Glu-226 each coordinate Mg(2+).

It belongs to the anthranilate phosphoribosyltransferase family. Homodimer. It depends on Mg(2+) as a cofactor.

The catalysed reaction is N-(5-phospho-beta-D-ribosyl)anthranilate + diphosphate = 5-phospho-alpha-D-ribose 1-diphosphate + anthranilate. The protein operates within amino-acid biosynthesis; L-tryptophan biosynthesis; L-tryptophan from chorismate: step 2/5. Catalyzes the transfer of the phosphoribosyl group of 5-phosphorylribose-1-pyrophosphate (PRPP) to anthranilate to yield N-(5'-phosphoribosyl)-anthranilate (PRA). The polypeptide is Anthranilate phosphoribosyltransferase (Brucella suis biovar 1 (strain 1330)).